A 74-amino-acid chain; its full sequence is UPF0352 protein HAPS_0210 (74 aa).

The protein belongs to the UPF0352 family.

The protein is UPF0352 protein HAPS_0210 of Glaesserella parasuis serovar 5 (strain SH0165) (Haemophilus parasuis).